A 325-amino-acid chain; its full sequence is CRISPR-associated endonuclease Cas1 2 (325 aa).

Mn(2+) is bound by residues Glu-145, His-212, and Asp-225. Residues 283–325 (EEEDPVEEDPTRPGGLWDLEGEVEGGVAYGGDDPGEGAEEPEG) are disordered. Positions 315 to 325 (DPGEGAEEPEG) are enriched in acidic residues.

Belongs to the CRISPR-associated endonuclease Cas1 family. Homodimer, forms a heterotetramer with a Cas2 homodimer. It depends on Mg(2+) as a cofactor. Mn(2+) is required as a cofactor.

Functionally, CRISPR (clustered regularly interspaced short palindromic repeat), is an adaptive immune system that provides protection against mobile genetic elements (viruses, transposable elements and conjugative plasmids). CRISPR clusters contain spacers, sequences complementary to antecedent mobile elements, and target invading nucleic acids. CRISPR clusters are transcribed and processed into CRISPR RNA (crRNA). Acts as a dsDNA endonuclease. Involved in the integration of spacer DNA into the CRISPR cassette. This is CRISPR-associated endonuclease Cas1 2 from Thermus thermophilus (strain ATCC 27634 / DSM 579 / HB8).